The following is a 620-amino-acid chain: Probable potassium transport system protein Kup 1 (620 aa).

Transmembrane regions (helical) follow at residues 7–27 (GIGLLVSAIGVVFGDIGTSPL), 50–70 (VLSLVFWTVMLLVTVKYVIVI), 102–122 (MMLGVIAAALFYGDSMITPAI), 136–156 (PDLKAYVVPITAVVLTLLFAI), 168–188 (FGPVMCMWFLTLALLGIANIV), 211–231 (LMSFYALGSVVLAVTGGEALY), 246–266 (WFGLVLPALLLNYFGQGALLI), 284–304 (MVVPMVALATLATVIASQAVI), 336–356 (IYVPFTNWTLYFAVMALVVGF), 368–388 (IAVTGTMMIDTILVSFVAALL), 393–413 (PVVVAVVIGTLLLLDFAFFAA), and 415–435 (IIKVAQGGWFPLFIGFISFTV).

Belongs to the HAK/KUP transporter (TC 2.A.72) family.

It localises to the cell inner membrane. It catalyses the reaction K(+)(in) + H(+)(in) = K(+)(out) + H(+)(out). Its function is as follows. Transport of potassium into the cell. Likely operates as a K(+):H(+) symporter. This Rhodopseudomonas palustris (strain ATCC BAA-98 / CGA009) protein is Probable potassium transport system protein Kup 1.